We begin with the raw amino-acid sequence, 209 residues long: Large ribosomal subunit protein uL3 (209 aa).

A disordered region spans residues 133 to 152 (THGNSLSHRVPGSIGQNQTP). Gln150 is subject to N5-methylglutamine.

Belongs to the universal ribosomal protein uL3 family. Part of the 50S ribosomal subunit. Forms a cluster with proteins L14 and L19. Post-translationally, methylated by PrmB.

In terms of biological role, one of the primary rRNA binding proteins, it binds directly near the 3'-end of the 23S rRNA, where it nucleates assembly of the 50S subunit. The chain is Large ribosomal subunit protein uL3 from Sodalis glossinidius (strain morsitans).